The following is a 551-amino-acid chain: Hedycaryol synthase TPS20CT (551 aa).

(2E,6E)-farnesyl diphosphate contacts are provided by Arg266, Asp303, Asp307, Arg444, and Asp447. Asp303 and Asp307 together coordinate Mg(2+). Residues 303-307 (DDIYD) carry the DDXXD motif motif. Residues Asp447, Ser451, and Glu455 each contribute to the Mg(2+) site.

This sequence belongs to the terpene synthase family. Tpsb subfamily. It depends on Mg(2+) as a cofactor. The cofactor is Mn(2+). Highly expressed in glandular trichomes.

It carries out the reaction (2E,6E)-farnesyl diphosphate + H2O = (2E,6E)-hedycaryol + diphosphate. Its pathway is secondary metabolite biosynthesis; terpenoid biosynthesis. In terms of biological role, involved in sesquiterpene olefins biosynthesis, constituants of cannabinoids and terpenoids-rich resins. Catalyzes primarily the conversion of (2E)-farnesyl diphosphate to hedycaryol, which is spontaneously converted to elemol as a thermal degradation product. This is Hedycaryol synthase TPS20CT from Cannabis sativa (Hemp).